Here is a 203-residue protein sequence, read N- to C-terminus: QQRFPQRYVQLVIVADHRMNTKYNGDSDKIRQWVHQIVNTINEIYRPLNIQFTLVGLEIWSNQDLITVTSVSHDTLASFGNWRETDLLRRQRHDNAQLLTAIDFDGDTVGLAYVGGMCQLKHSTGVIQDHSAINLLVALTMAHELGHNLGMNHDGNQCHCGANSCVMAAMLSDQPSKLFSDCSKKDYQTFLTVNNPQCILNKP.

The residue at position 1 (Gln1) is a Pyrrolidone carboxylic acid. In terms of domain architecture, Peptidase M12B spans 7–203; the sequence is RYVQLVIVAD…NNPQCILNKP (197 aa). Intrachain disulfides connect Cys118–Cys198, Cys158–Cys182, and Cys160–Cys165. His143 lines the Zn(2+) pocket. The active site involves Glu144. Positions 147 and 153 each coordinate Zn(2+).

The protein belongs to the venom metalloproteinase (M12B) family. P-I subfamily. As to quaternary structure, monomer. The cofactor is Zn(2+). In terms of tissue distribution, expressed by the venom gland.

The protein localises to the secreted. The enzyme catalyses Hydrolysis of 14-Ala-|-Leu-15 in insulin B chain and 413-Lys-|-Leu-414 in alpha-chain of fibrinogen.. Is inhibited by EDTA, o-phenanthroline and tetraethylenepentamine. Its function is as follows. Snake venom zinc metalloprotease that exhibits direct fibrinolytic activity. The protein is Snake venom metalloproteinase fibrolase of Agkistrodon contortrix contortrix (Southern copperhead).